A 199-amino-acid chain; its full sequence is Pyridoxine/pyridoxamine 5'-phosphate oxidase (199 aa).

Residues 45 to 50 (RVVLLK), 60 to 61 (FT), Arg66, Lys67, and Gln89 contribute to the FMN site. Lys50 is a substrate binding site. Substrate-binding residues include Tyr107, Arg111, and Ser115. Residues 124–125 (QS) and Trp169 each bind FMN. 175–177 (RIH) is a substrate binding site. Arg179 provides a ligand contact to FMN.

Belongs to the pyridoxamine 5'-phosphate oxidase family. In terms of assembly, homodimer. Requires FMN as cofactor.

It carries out the reaction pyridoxamine 5'-phosphate + O2 + H2O = pyridoxal 5'-phosphate + H2O2 + NH4(+). The catalysed reaction is pyridoxine 5'-phosphate + O2 = pyridoxal 5'-phosphate + H2O2. The protein operates within cofactor metabolism; pyridoxal 5'-phosphate salvage; pyridoxal 5'-phosphate from pyridoxamine 5'-phosphate: step 1/1. Its pathway is cofactor metabolism; pyridoxal 5'-phosphate salvage; pyridoxal 5'-phosphate from pyridoxine 5'-phosphate: step 1/1. Catalyzes the oxidation of either pyridoxine 5'-phosphate (PNP) or pyridoxamine 5'-phosphate (PMP) into pyridoxal 5'-phosphate (PLP). In Ehrlichia chaffeensis (strain ATCC CRL-10679 / Arkansas), this protein is Pyridoxine/pyridoxamine 5'-phosphate oxidase.